The following is a 286-amino-acid chain: DNA-directed RNA polymerase subunit Rpo3 (286 aa).

It belongs to the archaeal Rpo3/eukaryotic RPB3 RNA polymerase subunit family. Part of the RNA polymerase complex.

It is found in the cytoplasm. The catalysed reaction is RNA(n) + a ribonucleoside 5'-triphosphate = RNA(n+1) + diphosphate. Its function is as follows. DNA-dependent RNA polymerase (RNAP) catalyzes the transcription of DNA into RNA using the four ribonucleoside triphosphates as substrates. In Aeropyrum pernix (strain ATCC 700893 / DSM 11879 / JCM 9820 / NBRC 100138 / K1), this protein is DNA-directed RNA polymerase subunit Rpo3.